The primary structure comprises 146 residues: NADH-quinone oxidoreductase subunit A (146 aa).

The next 3 membrane-spanning stretches (helical) occupy residues F8 to T28, F63 to W83, and F93 to W113.

The protein belongs to the complex I subunit 3 family. In terms of assembly, NDH-1 is composed of 14 different subunits. Subunits NuoA, H, J, K, L, M, N constitute the membrane sector of the complex.

It is found in the cell inner membrane. It carries out the reaction a quinone + NADH + 5 H(+)(in) = a quinol + NAD(+) + 4 H(+)(out). Functionally, NDH-1 shuttles electrons from NADH, via FMN and iron-sulfur (Fe-S) centers, to quinones in the respiratory chain. The immediate electron acceptor for the enzyme in this species is believed to be a menaquinone. Couples the redox reaction to proton translocation (for every two electrons transferred, four hydrogen ions are translocated across the cytoplasmic membrane), and thus conserves the redox energy in a proton gradient. This Chlorobium chlorochromatii (strain CaD3) protein is NADH-quinone oxidoreductase subunit A.